Reading from the N-terminus, the 1714-residue chain is Intersectin-1 (1714 aa).

The 89-residue stretch at 21-109 (ERAKHDQQFL…PVMKQQPVAI (89 aa)) folds into the EH 1 domain. Positions 53–88 (LPQPVLAQIWALADMNNDGRMDQVEFSIAMKLIKLK) constitute an EF-hand 1 domain. Ca(2+) is bound by residues D66, N68, D70, R72, and E77. A Phosphoserine modification is found at S203. An EH 2 domain is found at 221 to 310 (SRLKYRQLFN…PEYIPPSFRR (90 aa)). Positions 254-289 (LPQAQLASIWNLSDIDQDGKLTAEEFILAMHLIDVA) constitute an EF-hand 2 domain. Ca(2+) contacts are provided by D267, D269, D271, K273, and E278. Over residues 310–325 (RVRSGSGMSVISSSSV) the composition is skewed to low complexity. Disordered regions lie at residues 310–356 (RVRS…KREN) and 614–706 (SKQQ…QSRL). A phosphoserine mark is found at S318, S334, and S335. A KLERQ region spans residues 326 to 702 (DQRLPEEPSS…ERAKPEMQDK (377 aa)). 2 stretches are compositionally biased toward basic and acidic residues: residues 340-356 (QPEK…KREN) and 622-706 (RSLE…QSRL). A coiled-coil region spans residues 354-658 (RENFERGSVE…QRRVQERDKQ (305 aa)). S685 carries the post-translational modification Phosphoserine. One can recognise an SH3 1 domain in the interval 738 to 799 (VKVVYYRALY…PANYAEKIPE (62 aa)). The interval 827-863 (APLPVTSSEPSTTPNNWADFSSTWPSSSNEKPETDNW) is disordered. Polar residues predominate over residues 831–855 (VTSSEPSTTPNNWADFSSTWPSSSN). The residue at position 890 (T890) is a Phosphothreonine. Phosphoserine is present on residues S894, S895, and S897. The SH3 2 domain occupies 906-964 (VEGLQAQALYPWRAKKDNHLNFNKSDVITVLEQQDMWWFGEVQGQKGWFPKSYVKLISG). S971 is subject to Phosphoserine. A Phosphothreonine modification is found at T977. Phosphoserine occurs at positions 979 and 988. SH3 domains lie at 995-1053 (IPGE…LKDS) and 1067-1131 (KKPE…LLSP). The segment at 1067 to 1131 (KKPEIAQVIA…PANYVKLLSP (65 aa)) is required for interaction with FCHSD2. Positions 1097 to 1120 (RKKNPGGWWEGELQARGKKRQIGW) match the Bipartite nuclear localization signal; in isoform 2 motif. S1130 is modified (phosphoserine). T1137 carries the phosphothreonine modification. The region spanning 1148-1207 (PAVCQVIGMYDYTAQNDDELAFSKGQIINVLNKEDPDWWKGEVSGQVGLFPSNYVKLTTD) is the SH3 5 domain. Residues 1230–1416 (KRQGYIHELI…EELCSQVNEG (187 aa)) form the DH domain. The PH domain maps to 1455–1564 (KFLHSGKLYK…WVQKIKAASE (110 aa)). The 117-residue stretch at 1572-1688 (KKREKAYLVR…KKDQGSKGPV (117 aa)) folds into the C2 domain. S1638 is subject to Phosphoserine. Positions 1660, 1663, and 1666 each coordinate Ca(2+).

Interacts (via DH domain) with CDC42. Interacts (via SH3 domain 1) with WASL. Interacts with dynamin, SNAP25 and SNAP23. Interacts with clathrin-associated proteins and other components of the endocytic machinery, such as SPIN90, EPS15, EPN1, EPN2, STON2, FCHO1, FCHO2 and DAB2. Interacts (via SH3 domains) with REPS1 and SGIP1. Interacts with ARHGAP31. Interacts with ADAM15. Interacts with PRRT2. Interacts (via SH3 domain 4) with FCHSD2 (via SH3 domain 2). Interacts (via SH3 domain 1) with DENND2B. Interacts (via SH3 domains) with CBL. Isoform 2: Interacts with CBL and DNM1. Isoform 2: Interacts with LMNA. Isoform 2: Interacts with importin subunit KPNA1; this is likely to mediate its import into the nucleus. Interacts with DNM2. Ca(2+) serves as cofactor. Detected in brain, adrenal gland and heart. Detected in neurons at the calyx of Held (at protein level). Isoform 1: Primarily detected in brain neurons. Isoform 2: Primarily detected in glia (at protein level). Widely expressed. Expressed at high levels in brain, heart and skeletal muscle.

It localises to the endomembrane system. It is found in the synapse. The protein localises to the synaptosome. Its subcellular location is the cell projection. The protein resides in the lamellipodium. It localises to the cell membrane. It is found in the membrane. The protein localises to the clathrin-coated pit. Its subcellular location is the recycling endosome. The protein resides in the endosome. It localises to the cytoplasmic vesicle. It is found in the cytoplasm. The protein localises to the nucleus envelope. Adapter protein that provides a link between the endocytic membrane traffic and the actin assembly machinery. Acts as a guanine nucleotide exchange factor (GEF) for CDC42, and thereby stimulates actin nucleation mediated by WASL and the ARP2/3 complex. Plays a role in the assembly and maturation of clathrin-coated vesicles. Recruits FCHSD2 to clathrin-coated pits. Involved in endocytosis of activated EGFR, and probably also other growth factor receptors. Involved in endocytosis of integrin beta-1 (ITGB1) and transferrin receptor (TFR); internalization of ITGB1 as DAB2-dependent cargo but not TFR may involve association with DAB2. Promotes ubiquitination and subsequent degradation of EGFR, and thereby contributes to the down-regulation of EGFR-dependent signaling pathways. In chromaffin cells, required for normal exocytosis of catecholamines. Required for rapid replenishment of release-ready synaptic vesicles at presynaptic active zones. Inhibits ARHGAP31 activity toward RAC1. Functionally, plays a role in synaptic vesicle endocytosis in brain neurons. This Mus musculus (Mouse) protein is Intersectin-1.